A 109-amino-acid polypeptide reads, in one-letter code: uncharacterized protein (109 aa).

A helical transmembrane segment spans residues 29 to 49 (ITIIITLVIIFIIFTLIILYF).

The protein localises to the membrane. This is an uncharacterized protein from Sputnik virophage.